Consider the following 263-residue polypeptide: Glucosamine-6-phosphate deaminase (263 aa).

Catalysis depends on Asp-72, which acts as the Proton acceptor; for enolization step. Asp-141 acts as the For ring-opening step in catalysis. His-143 acts as the Proton acceptor; for ring-opening step in catalysis. Glu-148 functions as the For ring-opening step in the catalytic mechanism.

It belongs to the glucosamine/galactosamine-6-phosphate isomerase family. NagB subfamily.

It catalyses the reaction alpha-D-glucosamine 6-phosphate + H2O = beta-D-fructose 6-phosphate + NH4(+). Its pathway is amino-sugar metabolism; N-acetylneuraminate degradation; D-fructose 6-phosphate from N-acetylneuraminate: step 5/5. Allosterically activated by N-acetylglucosamine 6-phosphate (GlcNAc6P). Functionally, catalyzes the reversible isomerization-deamination of glucosamine 6-phosphate (GlcN6P) to form fructose 6-phosphate (Fru6P) and ammonium ion. The chain is Glucosamine-6-phosphate deaminase from Porphyromonas gingivalis (strain ATCC BAA-308 / W83).